The sequence spans 284 residues: 4-hydroxy-3-methylbut-2-enyl diphosphate reductase (284 aa).

Cys-12 serves as a coordination point for [4Fe-4S] cluster. The (2E)-4-hydroxy-3-methylbut-2-enyl diphosphate site is built by His-40 and His-76. Dimethylallyl diphosphate contacts are provided by His-40 and His-76. 2 residues coordinate isopentenyl diphosphate: His-40 and His-76. Cys-98 serves as a coordination point for [4Fe-4S] cluster. His-126 contacts (2E)-4-hydroxy-3-methylbut-2-enyl diphosphate. His-126 contributes to the dimethylallyl diphosphate binding site. His-126 is a binding site for isopentenyl diphosphate. Glu-128 functions as the Proton donor in the catalytic mechanism. Thr-161 contacts (2E)-4-hydroxy-3-methylbut-2-enyl diphosphate. Position 191 (Cys-191) interacts with [4Fe-4S] cluster. (2E)-4-hydroxy-3-methylbut-2-enyl diphosphate is bound by residues Ser-219, Ser-220, Asn-221, and Ser-263. Dimethylallyl diphosphate is bound by residues Ser-219, Ser-220, Asn-221, and Ser-263. Isopentenyl diphosphate is bound by residues Ser-219, Ser-220, Asn-221, and Ser-263.

It belongs to the IspH family. Requires [4Fe-4S] cluster as cofactor.

It catalyses the reaction isopentenyl diphosphate + 2 oxidized [2Fe-2S]-[ferredoxin] + H2O = (2E)-4-hydroxy-3-methylbut-2-enyl diphosphate + 2 reduced [2Fe-2S]-[ferredoxin] + 2 H(+). It carries out the reaction dimethylallyl diphosphate + 2 oxidized [2Fe-2S]-[ferredoxin] + H2O = (2E)-4-hydroxy-3-methylbut-2-enyl diphosphate + 2 reduced [2Fe-2S]-[ferredoxin] + 2 H(+). The protein operates within isoprenoid biosynthesis; dimethylallyl diphosphate biosynthesis; dimethylallyl diphosphate from (2E)-4-hydroxy-3-methylbutenyl diphosphate: step 1/1. Its pathway is isoprenoid biosynthesis; isopentenyl diphosphate biosynthesis via DXP pathway; isopentenyl diphosphate from 1-deoxy-D-xylulose 5-phosphate: step 6/6. Catalyzes the conversion of 1-hydroxy-2-methyl-2-(E)-butenyl 4-diphosphate (HMBPP) into a mixture of isopentenyl diphosphate (IPP) and dimethylallyl diphosphate (DMAPP). Acts in the terminal step of the DOXP/MEP pathway for isoprenoid precursor biosynthesis. The sequence is that of 4-hydroxy-3-methylbut-2-enyl diphosphate reductase from Petrotoga mobilis (strain DSM 10674 / SJ95).